We begin with the raw amino-acid sequence, 159 residues long: Ribosomal RNA large subunit methyltransferase H (159 aa).

Residues leucine 76, glycine 108, and 127–132 (FGKLTM) each bind S-adenosyl-L-methionine.

This sequence belongs to the RNA methyltransferase RlmH family. In terms of assembly, homodimer.

The protein localises to the cytoplasm. It catalyses the reaction pseudouridine(1915) in 23S rRNA + S-adenosyl-L-methionine = N(3)-methylpseudouridine(1915) in 23S rRNA + S-adenosyl-L-homocysteine + H(+). Specifically methylates the pseudouridine at position 1915 (m3Psi1915) in 23S rRNA. This is Ribosomal RNA large subunit methyltransferase H from Lacticaseibacillus casei (strain BL23) (Lactobacillus casei).